The following is a 229-amino-acid chain: Molybdenum transport system permease protein ModB (229 aa).

At 1-16 the chain is on the periplasmic side; it reads MILTDPEWQAVLLSLK. One can recognise an ABC transmembrane type-1 domain in the interval 11–219; that stretch reads VLLSLKVSSL…MISLLISEWL (209 aa). The helical transmembrane segment at 17-37 threads the bilayer; the sequence is VSSLAVLFSLPFGIFFAWLLV. Residues 38 to 49 lie on the Cytoplasmic side of the membrane; it reads RCTFPGKALLDS. The chain crosses the membrane as a helical span at residues 50–70; sequence VLHLPLVLPPVVVGYLLLVSM. Residues 71–83 are Periplasmic-facing; it reads GRRGFIGERLYDW. The helical transmembrane segment at 84–104 threads the bilayer; the sequence is FGITFAFSWRGAVLAAAVMSF. Residues 105–136 lie on the Cytoplasmic side of the membrane; sequence PLMVRAIRLALEGVDVKLEQAARTLGAGRWRV. The chain crosses the membrane as a helical span at residues 137-157; that stretch reads FFTITLPLTLPGIIVGTVLAF. Topologically, residues 158-201 are periplasmic; sequence ARSLGEFGATITFVSNIPGETRTIPSAMYTLIQTPGGESGAARL. A helical membrane pass occupies residues 202-222; sequence CIISIALAMISLLISEWLARI. The Cytoplasmic segment spans residues 223–229; sequence SRERAGR.

Belongs to the binding-protein-dependent transport system permease family. CysTW subfamily.

The protein localises to the cell inner membrane. Part of the binding-protein-dependent transport system for molybdenum; probably responsible for the translocation of the substrate across the membrane. The sequence is that of Molybdenum transport system permease protein ModB (modB) from Escherichia coli O157:H7.